The primary structure comprises 141 residues: Nuclear receptor 2C2-associated protein (141 aa).

The protein belongs to the NR2C2AP family.

The protein resides in the nucleus. May act as a repressor of nr2c2-mediated transactivation by suppressing the binding between nr2c2 and its response element in target genes. The protein is Nuclear receptor 2C2-associated protein (nr2c2ap) of Danio rerio (Zebrafish).